The primary structure comprises 99 residues: DNA-binding protein Fis (99 aa).

Positions 1–25 are disordered; sequence MFEQKISSEALTTTTSIPATGQITQ. The segment at residues 75–94 is a DNA-binding region (H-T-H motif); the sequence is QTRAATMLGINRGTLRKKLK.

Belongs to the transcriptional regulatory Fis family. In terms of assembly, homodimer.

Activates ribosomal RNA transcription. Plays a direct role in upstream activation of rRNA promoters. This is DNA-binding protein Fis from Psychromonas ingrahamii (strain DSM 17664 / CCUG 51855 / 37).